Consider the following 487-residue polypeptide: NADH-quinone oxidoreductase subunit N (487 aa).

A run of 14 helical transmembrane segments spans residues 8–28 (LLAL…MLAI), 37–57 (AFVV…IVMA), 71–91 (GYAV…CTFG), 104–124 (EFYL…GSRH), 125–145 (LASL…LVGY), 159–179 (YMVL…LLYA), 203–223 (LMGG…LAPF), 235–255 (PAPV…CVLL), 269–289 (IHWL…LLAL), 303–323 (ISHF…QMPV), 327–347 (GVYL…ISMM), 374–394 (AVLT…GFIG), 408–427 (WWLS…YYLR), and 449–469 (AITS…ALGL).

This sequence belongs to the complex I subunit 2 family. As to quaternary structure, NDH-1 is composed of 14 different subunits. Subunits NuoA, H, J, K, L, M, N constitute the membrane sector of the complex.

Its subcellular location is the cell inner membrane. The enzyme catalyses a quinone + NADH + 5 H(+)(in) = a quinol + NAD(+) + 4 H(+)(out). NDH-1 shuttles electrons from NADH, via FMN and iron-sulfur (Fe-S) centers, to quinones in the respiratory chain. The immediate electron acceptor for the enzyme in this species is believed to be ubiquinone. Couples the redox reaction to proton translocation (for every two electrons transferred, four hydrogen ions are translocated across the cytoplasmic membrane), and thus conserves the redox energy in a proton gradient. The chain is NADH-quinone oxidoreductase subunit N from Aeromonas hydrophila subsp. hydrophila (strain ATCC 7966 / DSM 30187 / BCRC 13018 / CCUG 14551 / JCM 1027 / KCTC 2358 / NCIMB 9240 / NCTC 8049).